Reading from the N-terminus, the 443-residue chain is Methyl-coenzyme M reductase I subunit beta (443 aa).

Tyr-367 contacts coenzyme M. Gly-369 contacts coenzyme B.

Belongs to the methyl-coenzyme M reductase beta subunit family. In terms of assembly, MCR is a hexamer of two alpha, two beta, and two gamma chains, forming a dimer of heterotrimers. Coenzyme F430 serves as cofactor.

It localises to the cytoplasm. It catalyses the reaction coenzyme B + methyl-coenzyme M = methane + coenzyme M-coenzyme B heterodisulfide. It participates in one-carbon metabolism; methyl-coenzyme M reduction; methane from methyl-coenzyme M: step 1/1. With respect to regulation, methyl-coenzyme M reductase activity is inhibited by 3-nitrooxypropanol (3-NOP) in vitro and in vivo, by oxidation of its active site Ni(I), which stops both growth and methanogenesis. Is also inhibited by the reaction product CoM-S-S-CoB. Functionally, component of the methyl-coenzyme M reductase (MCR) I that catalyzes the reductive cleavage of methyl-coenzyme M (CoM-S-CH3 or 2-(methylthio)ethanesulfonate) using coenzyme B (CoB or 7-mercaptoheptanoylthreonine phosphate) as reductant which results in the production of methane and the mixed heterodisulfide of CoB and CoM (CoM-S-S-CoB). This is the final step in methanogenesis. Neither N-6-mercaptohexanoylthreonine phosphate (H-S-HxoTP) nor N-8-mercaptooctanoylthreonine phosphate (H-SOcoTP) nor any other thiol compound such as CoA or CoM can substitute for CoB as the electron donor. This chain is Methyl-coenzyme M reductase I subunit beta (mcrB), found in Methanothermobacter marburgensis (strain ATCC BAA-927 / DSM 2133 / JCM 14651 / NBRC 100331 / OCM 82 / Marburg) (Methanobacterium thermoautotrophicum).